We begin with the raw amino-acid sequence, 259 residues long: Protein unc-50 homolog (259 aa).

Met-1 is modified (N-acetylmethionine). Over 1 to 82 the chain is Cytoplasmic; the sequence is MLPSTSLNSS…TKDQWARDDP (82 aa). Ser-6 carries the phosphoserine modification. Residues 83–103 traverse the membrane as a helical segment; it reads AFLVLLSIWLCVSTIGFGFVL. The Lumenal portion of the chain corresponds to 104–115; that stretch reads DMGFFETIKLLL. The helical transmembrane segment at 116-136 threads the bilayer; sequence WVVFIDCVGVGLLISTLMWFI. The Cytoplasmic segment spans residues 137 to 163; sequence SNKYLVKRQSRDYDVEWGYAFDVHLNA. Residues 164–184 form a helical membrane-spanning segment; it reads FYPLLVILHFIQLFFINHVIL. Residues 185–187 lie on the Lumenal side of the membrane; sequence TDT. The helical transmembrane segment at 188-208 threads the bilayer; that stretch reads FIGYLVGNTLWLIAVGYYIYV. At 209 to 222 the chain is on the cytoplasmic side; sequence TFLGYSALPFLKNT. Residues 223-243 form a helical membrane-spanning segment; sequence VVLLYPFAPLIVLYGLSLALG. Topologically, residues 244–259 are lumenal; it reads WNFTHTLCSFYKYRVK.

Belongs to the unc-50 family. Expressed in brain, kidney and testis, and at lower levels in heart.

The protein resides in the nucleus inner membrane. It is found in the golgi apparatus membrane. Involved in the cell surface expression of neuronal nicotinic receptors. Binds RNA. The sequence is that of Protein unc-50 homolog (Unc50) from Rattus norvegicus (Rat).